The following is a 427-amino-acid chain: 4-hydroxy-3-methylbut-2-en-1-yl diphosphate synthase (flavodoxin) (427 aa).

The disordered stretch occupies residues Met-1 to Thr-21. [4Fe-4S] cluster is bound by residues Cys-310, Cys-313, Cys-356, and Glu-363.

This sequence belongs to the IspG family. [4Fe-4S] cluster is required as a cofactor.

The enzyme catalyses (2E)-4-hydroxy-3-methylbut-2-enyl diphosphate + oxidized [flavodoxin] + H2O + 2 H(+) = 2-C-methyl-D-erythritol 2,4-cyclic diphosphate + reduced [flavodoxin]. The protein operates within isoprenoid biosynthesis; isopentenyl diphosphate biosynthesis via DXP pathway; isopentenyl diphosphate from 1-deoxy-D-xylulose 5-phosphate: step 5/6. Functionally, converts 2C-methyl-D-erythritol 2,4-cyclodiphosphate (ME-2,4cPP) into 1-hydroxy-2-methyl-2-(E)-butenyl 4-diphosphate. This chain is 4-hydroxy-3-methylbut-2-en-1-yl diphosphate synthase (flavodoxin), found in Bradyrhizobium diazoefficiens (strain JCM 10833 / BCRC 13528 / IAM 13628 / NBRC 14792 / USDA 110).